We begin with the raw amino-acid sequence, 82 residues long: Cytochrome b559 subunit alpha (82 aa).

A helical transmembrane segment spans residues 22 to 36 (IIHAVTLPAIFIAGF). H24 contacts heme.

It belongs to the PsbE/PsbF family. Heterodimer of an alpha subunit and a beta subunit. PSII is composed of 1 copy each of membrane proteins PsbA, PsbB, PsbC, PsbD, PsbE, PsbF, PsbH, PsbI, PsbJ, PsbK, PsbL, PsbM, PsbT, PsbX, PsbY, Psb30/Ycf12, peripheral proteins PsbO, CyanoQ (PsbQ), PsbU, PsbV and a large number of cofactors. It forms dimeric complexes. Heme b is required as a cofactor.

Its subcellular location is the cellular thylakoid membrane. Its function is as follows. This b-type cytochrome is tightly associated with the reaction center of photosystem II (PSII). PSII is a light-driven water:plastoquinone oxidoreductase that uses light energy to abstract electrons from H(2)O, generating O(2) and a proton gradient subsequently used for ATP formation. It consists of a core antenna complex that captures photons, and an electron transfer chain that converts photonic excitation into a charge separation. This is Cytochrome b559 subunit alpha from Prochlorococcus marinus (strain SARG / CCMP1375 / SS120).